A 233-amino-acid chain; its full sequence is Large ribosomal subunit protein bL19c (233 aa).

The N-terminal 77 residues, 1–77 (MASKVLPQAL…FPARNSFVVR (77 aa)), are a transit peptide targeting the chloroplast.

In terms of assembly, component of the chloroplast large ribosomal subunit (LSU). Mature 70S chloroplast ribosomes of higher plants consist of a small (30S) and a large (50S) subunit. The 30S small subunit contains 1 molecule of ribosomal RNA (16S rRNA) and 24 different proteins. The 50S large subunit contains 3 rRNA molecules (23S, 5S and 4.5S rRNA) and 33 different proteins.

The protein resides in the plastid. It is found in the chloroplast. Its function is as follows. Component of the chloroplast ribosome (chloro-ribosome), a dedicated translation machinery responsible for the synthesis of chloroplast genome-encoded proteins, including proteins of the transcription and translation machinery and components of the photosynthetic apparatus. In Spinacia oleracea (Spinach), this protein is Large ribosomal subunit protein bL19c (RPL19).